We begin with the raw amino-acid sequence, 369 residues long: NAD-dependent epimerase/dehydratase FUM13 (369 aa).

Position 176 (Tyr-176) interacts with NADP(+).

Belongs to the NAD(P)-dependent epimerase/dehydratase family. Dihydroflavonol-4-reductase subfamily.

Its pathway is mycotoxin biosynthesis. Functionally, NAD-dependent epimerase/dehydratase; part of the gene cluster that mediates the biosynthesis of fumonisins B1 (FB1), B2 (FB2), B3 (FB3), and B4 (FB4), which are carcinogenic mycotoxins. Within the pathway, FUM13 stereospecifically reduces the intermediate 3-keto intermediate 2-amino-3-oxo-12,16-dimethylicosane to the 3-hydroxyl product 2-amino-3-hydroxy-12,16-dimethylicosane. The biosynthesis starts with the FUM1-catalyzed carbon chain assembly from one molecule of acetyl-CoA, eight molecules of malonyl-CoA, and two molecules of methionine (in S-adenosyl form). The C18 polyketide chain is released from the enzyme by a nucleophilic attack of a carbanion, which is derived from R-carbon of alanine by decarboxylation, on the carbonyl carbon of polyketide acyl chain. This step is catalyzed by the pyridoxal 5'-phosphate-dependent aminoacyl transferase FUM8. The resultant 3-keto intermediate is then stereospecifically reduced to a 3-hydroxyl product by reductase FUM13. Subsequent oxidations at C-10 by the cytochrome P450 monooxygenase FUM2, C-14 and C-15 by FUM6, FUM12 or FUM15, tricarballylic esterification of the hydroxyl groups on C-14 and C-15 by acyltransferase FUM14, and C-5 hydroxylation by 2-keto-glutarate-dependent dioxygenase FUM3 furnish the biosynthesis of fumonisins. The tricarballylic moieties are most likely derived from the citric acid cycle, and their addition to the carbon backbone may involve FUM7, FUM10, FUM11 and FUM14. In Gibberella moniliformis (strain M3125 / FGSC 7600) (Maize ear and stalk rot fungus), this protein is NAD-dependent epimerase/dehydratase FUM13.